A 321-amino-acid chain; its full sequence is Polygalacturonan/rhamnogalacturonan transport system permease protein YteP (321 aa).

The ABC transmembrane type-1 domain occupies 1 to 144; it reads MKTAEAQAPA…YIPHFMSWVI (144 aa). Transmembrane regions (helical) follow at residues 21 to 41, 63 to 83, and 123 to 143; these read RKRL…ILPG, YQPF…FIRL, and IALF…MSWV.

Belongs to the binding-protein-dependent transport system permease family. The complex is probably composed of two ATP-binding proteins (MsmX), two transmembrane proteins (YtcP and YteP) and a solute-binding protein (YtcQ).

The protein resides in the cell membrane. Functionally, involved in pectin degradation. Part of the ABC transporter complex YtcQP-YteP involved in the uptake of polygalacturonan and rhamnogalacturonan type I. Responsible for the translocation of the substrate across the membrane. The polypeptide is Polygalacturonan/rhamnogalacturonan transport system permease protein YteP (yteP) (Bacillus subtilis (strain 168)).